We begin with the raw amino-acid sequence, 398 residues long: Phosphoglycerate kinase (398 aa).

Substrate is bound by residues 23–25 (DFN), R38, 61–64 (HMGK), R122, and R155. Residues K206, G297, E328, and 354 to 357 (GGDS) each bind ATP.

It belongs to the phosphoglycerate kinase family. In terms of assembly, monomer.

It is found in the cytoplasm. It carries out the reaction (2R)-3-phosphoglycerate + ATP = (2R)-3-phospho-glyceroyl phosphate + ADP. The protein operates within carbohydrate degradation; glycolysis; pyruvate from D-glyceraldehyde 3-phosphate: step 2/5. This chain is Phosphoglycerate kinase, found in Clostridium botulinum (strain Langeland / NCTC 10281 / Type F).